Reading from the N-terminus, the 81-residue chain is Small ribosomal subunit protein bS16c (81 aa).

The protein belongs to the bacterial ribosomal protein bS16 family.

Its subcellular location is the plastid. The protein resides in the chloroplast. The polypeptide is Small ribosomal subunit protein bS16c (Emiliania huxleyi (Coccolithophore)).